The chain runs to 572 residues: MEYWKHTNHGKDAGNELETSMATHGNKLTNKITYILWTIILVLLSIVFIIVLINSIKSEKAHKSLLQDINNEFMEITEKIQMASDNTNDLIQSGVNTRLLTIQSHVQNYIPISLTQQMSDLRKFISEITIRNDNQEVPPQRIIHDVGIKPLNPDDFWRCTSGLPSLMRTPKIRLMPGPGLLAMPTTVDGCVRTPSLVINDLIYAYTSNLITRGCQDIGKSYQVLQIGIITVNSDLVPDLNPRISHTFNINDNRKSCSLALLNTDVYQLCSTPKVDERSDYASSGIEDIVLDIVNYDGSISTTRFKNNNISFDQPYAASYPSVGPGIYYKGKIIFLGYGGLEHPINENVICNTTGCPGKTQRDCNQASHSPWFSDRRMVNSIIVVDKGLNSIPKLKVWTISMRQNYWGSEGRLLLLGNKIYIYTRSTSWHSKLQLGIIDITDYSDIRIKWTWHNVLSRPGNNECPWGHSCPDGCITGVYTDAYPLNPTGSIVSSVILDSQKSRVNPVITYSTATERVNELAIRNRTLSAGYTTTSCITHYNKGYCFHIVEINHKSSNTFQPMLFKTEIPKSCS.

The Intravirion segment spans residues 1-31 (MEYWKHTNHGKDAGNELETSMATHGNKLTNK). Residues 32-52 (ITYILWTIILVLLSIVFIIVL) form a helical membrane-spanning segment. Over 53–572 (INSIKSEKAH…FKTEIPKSCS (520 aa)) the chain is Virion surface. 2 cysteine pairs are disulfide-bonded: C190/C214 and C256/C269. The interval 252–257 (NRKSCS) is involved in neuraminidase activity. Residues N308 and N351 are each glycosylated (N-linked (GlcNAc...) asparagine; by host). 2 disulfides stabilise this stretch: C355–C469 and C463–C473. N-linked (GlcNAc...) asparagine; by host glycosylation is present at N523. C535 and C544 form a disulfide bridge.

This sequence belongs to the paramyxoviruses hemagglutinin-neuraminidase family. In terms of assembly, homotetramer; composed of disulfide-linked homodimers. Interacts with F protein trimer.

The protein resides in the virion membrane. It is found in the host cell membrane. It carries out the reaction Hydrolysis of alpha-(2-&gt;3)-, alpha-(2-&gt;6)-, alpha-(2-&gt;8)- glycosidic linkages of terminal sialic acid residues in oligosaccharides, glycoproteins, glycolipids, colominic acid and synthetic substrates.. Attaches the virus to sialic acid-containing cell receptors and thereby initiating infection. Binding of HN protein to the receptor induces a conformational change that allows the F protein to trigger virion/cell membranes fusion. In terms of biological role, neuraminidase activity ensures the efficient spread of the virus by dissociating the mature virions from the neuraminic acid containing glycoproteins. The polypeptide is Hemagglutinin-neuraminidase (HN) (Homo sapiens (Human)).